The following is a 350-amino-acid chain: D-alanine--D-alanine ligase (350 aa).

Residues 143–344 (KRILSTFGIS…FKSLINKLIL (202 aa)) form the ATP-grasp domain. Residue 172–227 (INNIKFPCCIKPSNQGSSFGVNVANDFISLKESIDVAFLYSKKILIEPFIQGREIE) coordinates ATP. Mg(2+) contacts are provided by Asp-298, Glu-311, and Asn-313.

Belongs to the D-alanine--D-alanine ligase family. Mg(2+) serves as cofactor. Requires Mn(2+) as cofactor.

Its subcellular location is the cytoplasm. It carries out the reaction 2 D-alanine + ATP = D-alanyl-D-alanine + ADP + phosphate + H(+). Its pathway is cell wall biogenesis; peptidoglycan biosynthesis. Cell wall formation. This Wigglesworthia glossinidia brevipalpis protein is D-alanine--D-alanine ligase.